The chain runs to 161 residues: Probable K(+)/H(+) antiporter subunit E (161 aa).

2 consecutive transmembrane segments (helical) span residues 4 to 21 (WFPYPLLSIALLLMWLLL) and 28 to 50 (GSIVLGLVVSTVLAWVTLNLQPA).

The protein belongs to the CPA3 antiporters (TC 2.A.63) subunit E family. May form a hetero-oligomeric complex that consists of six subunits: PhaAB, PhaC, PhaD, PhaE, PhaF and PhaG.

It is found in the cell membrane. Its function is as follows. Part of a K(+) efflux system which is required for the adaptation of R.meliloti to alkaline pH as well as for the infection process during symbiotic nodule development. This Rhizobium meliloti (strain 1021) (Ensifer meliloti) protein is Probable K(+)/H(+) antiporter subunit E (phaE).